The following is a 93-amino-acid chain: Small ribosomal subunit protein uS19 (93 aa).

It belongs to the universal ribosomal protein uS19 family.

Its function is as follows. Protein S19 forms a complex with S13 that binds strongly to the 16S ribosomal RNA. The protein is Small ribosomal subunit protein uS19 of Alkaliphilus oremlandii (strain OhILAs) (Clostridium oremlandii (strain OhILAs)).